Here is a 267-residue protein sequence, read N- to C-terminus: Interleukin-1 beta (267 aa).

Residues 1-114 (MAIVPEPAKE…ETCNDDFVCD (114 aa)) constitute a propeptide that is removed on maturation.

Belongs to the IL-1 family. In terms of assembly, (Microbial infection) Interacts with African swine fever virus (ASFV) protein L83L. As to quaternary structure, monomer. In its precursor form, weakly interacts with full-length MEFV; the mature cytokine does not interact at all. Interacts with integrins ITGAV:ITGBV and ITGA5:ITGB1; integrin-binding is required for IL1B signaling. Interacts with cargo receptor TMED10; the interaction is direct and is required for the secretion of IL1B mature form. Interacts with HSP90AB1; the interaction facilitates cargo translocation into the ERGIC. Interacts with HSP90B1; the interaction facilitates cargo translocation into the ERGIC.

The protein localises to the cytoplasm. Its subcellular location is the cytosol. The protein resides in the secreted. It is found in the lysosome. It localises to the extracellular exosome. Functionally, potent pro-inflammatory cytokine. Initially discovered as the major endogenous pyrogen, induces prostaglandin synthesis, neutrophil influx and activation, T-cell activation and cytokine production, B-cell activation and antibody production, and fibroblast proliferation and collagen production. Promotes Th17 differentiation of T-cells. Synergizes with IL12/interleukin-12 to induce IFNG synthesis from T-helper 1 (Th1) cells. Plays a role in angiogenesis by inducing VEGF production synergistically with TNF and IL6. Involved in transduction of inflammation downstream of pyroptosis: its mature form is specifically released in the extracellular milieu by passing through the gasdermin-D (GSDMD) pore. This chain is Interleukin-1 beta (IL1B), found in Sus scrofa (Pig).